The primary structure comprises 149 residues: Transcriptional repressor NrdR (149 aa).

A zinc finger lies at 3–34 (CPFCSAVDTKVIDSRLVAEGHQVRRRRECLLC). The ATP-cone domain occupies 49 to 139 (PRVIKSNGSR…VYRSFEDIRE (91 aa)).

Belongs to the NrdR family. It depends on Zn(2+) as a cofactor.

Functionally, negatively regulates transcription of bacterial ribonucleotide reductase nrd genes and operons by binding to NrdR-boxes. In Aeromonas salmonicida (strain A449), this protein is Transcriptional repressor NrdR.